Reading from the N-terminus, the 102-residue chain is uncharacterized protein (102 aa).

Positions 1–102 (MPVEQDGLTG…LANIREQNHQ (102 aa)) are disordered.

This is an uncharacterized protein from Caenorhabditis elegans.